Consider the following 333-residue polypeptide: Lipoyl synthase (333 aa).

Residues Cys55, Cys60, Cys66, Cys81, Cys85, Cys88, and Ser292 each contribute to the [4Fe-4S] cluster site. The 215-residue stretch at Trp67–Ala281 folds into the Radical SAM core domain.

Belongs to the radical SAM superfamily. Lipoyl synthase family. The cofactor is [4Fe-4S] cluster.

The protein localises to the cytoplasm. The catalysed reaction is [[Fe-S] cluster scaffold protein carrying a second [4Fe-4S](2+) cluster] + N(6)-octanoyl-L-lysyl-[protein] + 2 oxidized [2Fe-2S]-[ferredoxin] + 2 S-adenosyl-L-methionine + 4 H(+) = [[Fe-S] cluster scaffold protein] + N(6)-[(R)-dihydrolipoyl]-L-lysyl-[protein] + 4 Fe(3+) + 2 hydrogen sulfide + 2 5'-deoxyadenosine + 2 L-methionine + 2 reduced [2Fe-2S]-[ferredoxin]. Its pathway is protein modification; protein lipoylation via endogenous pathway; protein N(6)-(lipoyl)lysine from octanoyl-[acyl-carrier-protein]: step 2/2. Functionally, catalyzes the radical-mediated insertion of two sulfur atoms into the C-6 and C-8 positions of the octanoyl moiety bound to the lipoyl domains of lipoate-dependent enzymes, thereby converting the octanoylated domains into lipoylated derivatives. The protein is Lipoyl synthase of Kineococcus radiotolerans (strain ATCC BAA-149 / DSM 14245 / SRS30216).